Reading from the N-terminus, the 239-residue chain is tRNA (guanine-N(7)-)-methyltransferase (239 aa).

Residues Glu69, Glu94, Asp121, and Asp144 each contribute to the S-adenosyl-L-methionine site. Asp144 is an active-site residue. Residues Lys148, Asp180, and 217–220 (TNFE) each bind substrate.

The protein belongs to the class I-like SAM-binding methyltransferase superfamily. TrmB family. In terms of assembly, monomer.

The catalysed reaction is guanosine(46) in tRNA + S-adenosyl-L-methionine = N(7)-methylguanosine(46) in tRNA + S-adenosyl-L-homocysteine. It participates in tRNA modification; N(7)-methylguanine-tRNA biosynthesis. Its function is as follows. Catalyzes the formation of N(7)-methylguanine at position 46 (m7G46) in tRNA. The sequence is that of tRNA (guanine-N(7)-)-methyltransferase from Buchnera aphidicola subsp. Schizaphis graminum (strain Sg).